A 153-amino-acid chain; its full sequence is 3-hydroxyacyl-[acyl-carrier-protein] dehydratase FabZ (153 aa).

H47 is a catalytic residue.

The protein belongs to the thioester dehydratase family. FabZ subfamily.

It is found in the cytoplasm. The enzyme catalyses a (3R)-hydroxyacyl-[ACP] = a (2E)-enoyl-[ACP] + H2O. Functionally, involved in unsaturated fatty acids biosynthesis. Catalyzes the dehydration of short chain beta-hydroxyacyl-ACPs and long chain saturated and unsaturated beta-hydroxyacyl-ACPs. This is 3-hydroxyacyl-[acyl-carrier-protein] dehydratase FabZ from Myxococcus xanthus (strain DK1622).